The following is a 341-amino-acid chain: Paired box protein Pax-9 (341 aa).

A DNA-binding region (paired) is located at residues 4–130; sequence AFGEVNQLGG…SSISRILRNK (127 aa). The PAI subdomain stretch occupies residues 7–63; it reads EVNQLGGVFVNGRPLPNAIRLRIVELAQLGIRPCDISRQLRVSHGCVSKILARYNET. Residues 82–130 form an RED subdomain region; that stretch reads TVVKHIRTYKQRDPGIFAWEIRDRLLADGVCDKYNVPSVSSISRILRNK. An interaction with KDM5B region spans residues 168-189; sequence AAAAKVPTPPGVPAIPGSVAMP.

In terms of assembly, interacts with KDM5B.

The protein resides in the nucleus. Transcription factor required for normal development of thymus, parathyroid glands, ultimobranchial bodies, teeth, skeletal elements of skull and larynx as well as distal limbs. This Pan troglodytes (Chimpanzee) protein is Paired box protein Pax-9 (PAX9).